The primary structure comprises 894 residues: RNA polymerase I-specific transcription initiation factor RRN6 (894 aa).

The interval 803-894 is disordered; the sequence is PPFNLNSQSQ…KKKKRIRGFG (92 aa). Polar residues-rich tracts occupy residues 806–823, 832–849, and 863–880; these read NLNS…QSSG, KTQS…QNLS, and QPPS…PRNS. The segment covering 881–894 has biased composition (basic residues); sequence QKAKKKKKRIRGFG.

Component of the core factor (CF) complex, which consists of RRN6, RRN7 and RRN11. The CF heterotrimer may further dimerize to form a hexamer. RRN6 interacts with RRN7, RRN11 and RRN9.

The protein resides in the cytoplasm. It localises to the nucleus. Its subcellular location is the nucleolus. Functionally, acts as a component of the core factor (CF) complex which is essential for the initiation of rDNA transcription by RNA polymerase I. After binding of UAF (upstream activation factor) to an upstream element of the promoter, CF is recruited in a SPT15/TBP-dependent manner to form a preinitiation complex. The sequence is that of RNA polymerase I-specific transcription initiation factor RRN6 (RRN6) from Saccharomyces cerevisiae (strain ATCC 204508 / S288c) (Baker's yeast).